Reading from the N-terminus, the 423-residue chain is Replication factor C large subunit (423 aa).

ATP is bound at residue 63-70; sequence GPPGIGKT.

Belongs to the activator 1 small subunits family. RfcL subfamily. In terms of assembly, heteromultimer composed of small subunits (RfcS) and large subunits (RfcL).

Functionally, part of the RFC clamp loader complex which loads the PCNA sliding clamp onto DNA. This Pyrobaculum islandicum (strain DSM 4184 / JCM 9189 / GEO3) protein is Replication factor C large subunit.